A 268-amino-acid chain; its full sequence is Phosphatidylcholine synthase (268 aa).

Residues 1-27 (MAARKAAKKLTDRIPRPKKKVTWPQAR) lie on the Cytoplasmic side of the membrane. Residues 28 to 48 (AFSVHLLTASGSFLAFLSLVA) traverse the membrane as a helical segment. At 49-53 (ASEER) the chain is on the periplasmic side. Residues 54-74 (WTAMFWWLGLALFVDGIDGPI) form a helical membrane-spanning segment. Over 75–88 (ARKLEVKEILPTWS) the chain is Cytoplasmic. A helical transmembrane segment spans residues 89 to 109 (GELLDNIIDYVTYVLIPAFAL). Over 110–112 (YQR) the chain is Periplasmic. The helical transmembrane segment at 113-133 (GFMGEGLSFLSAAIIVVSSAI) threads the bilayer. Topologically, residues 134–145 (YYADTGMKTKEN) are cytoplasmic. The helical transmembrane segment at 146 to 166 (FFKGFPVVWNMVVFTLFVIEP) threads the bilayer. Topologically, residues 167–168 (GQ) are periplasmic. Residues 169 to 189 (WVSFAVVVVAGILTFVPINFI) traverse the membrane as a helical segment. At 190-203 (HPVRVVRLRPFNLT) the chain is on the cytoplasmic side. Residues 204 to 224 (MTLLWCAFGALALAQAALAAF) form a helical membrane-spanning segment. Over 225–240 (YDQIGVLGAQVSTFIK) the chain is Periplasmic. A helical membrane pass occupies residues 241–261 (IGITITGLYLACIGGIMQFFP). The Cytoplasmic segment spans residues 262-268 (NLGAKKA).

It belongs to the CDP-alcohol phosphatidyltransferase class-I family. Requires Mn(2+) as cofactor.

It is found in the cell inner membrane. The catalysed reaction is a CDP-1,2-diacyl-sn-glycerol + choline = a 1,2-diacyl-sn-glycero-3-phosphocholine + CMP + H(+). Its function is as follows. Condenses choline with CDP-diglyceride to produce phosphatidylcholine and CMP. This chain is Phosphatidylcholine synthase (pcs), found in Mesorhizobium japonicum (strain LMG 29417 / CECT 9101 / MAFF 303099) (Mesorhizobium loti (strain MAFF 303099)).